Consider the following 361-residue polypeptide: Phosphoserine aminotransferase (361 aa).

Residue R42 participates in L-glutamate binding. Pyridoxal 5'-phosphate contacts are provided by residues 76-77 (AT), W102, T152, D172, and Q195. An N6-(pyridoxal phosphate)lysine modification is found at K196. 237 to 238 (NT) serves as a coordination point for pyridoxal 5'-phosphate.

It belongs to the class-V pyridoxal-phosphate-dependent aminotransferase family. SerC subfamily. In terms of assembly, homodimer. Pyridoxal 5'-phosphate serves as cofactor.

The protein localises to the cytoplasm. It carries out the reaction O-phospho-L-serine + 2-oxoglutarate = 3-phosphooxypyruvate + L-glutamate. The catalysed reaction is 4-(phosphooxy)-L-threonine + 2-oxoglutarate = (R)-3-hydroxy-2-oxo-4-phosphooxybutanoate + L-glutamate. Its pathway is amino-acid biosynthesis; L-serine biosynthesis; L-serine from 3-phospho-D-glycerate: step 2/3. It functions in the pathway cofactor biosynthesis; pyridoxine 5'-phosphate biosynthesis; pyridoxine 5'-phosphate from D-erythrose 4-phosphate: step 3/5. Catalyzes the reversible conversion of 3-phosphohydroxypyruvate to phosphoserine and of 3-hydroxy-2-oxo-4-phosphonooxybutanoate to phosphohydroxythreonine. The protein is Phosphoserine aminotransferase of Stenotrophomonas maltophilia (strain K279a).